The following is a 63-amino-acid chain: Large ribosomal subunit protein bL35 (63 aa).

This sequence belongs to the bacterial ribosomal protein bL35 family.

This chain is Large ribosomal subunit protein bL35, found in Campylobacter hominis (strain ATCC BAA-381 / DSM 21671 / CCUG 45161 / LMG 19568 / NCTC 13146 / CH001A).